Reading from the N-terminus, the 90-residue chain is Phosphocarrier protein HPr (90 aa).

Residues 1–89 (MPALEITIIN…ELINNRFDEG (89 aa)) enclose the HPr domain. Catalysis depends on His15, which acts as the Pros-phosphohistidine intermediate.

This sequence belongs to the HPr family.

Its subcellular location is the cytoplasm. General (non sugar-specific) component of the phosphoenolpyruvate-dependent sugar phosphotransferase system (sugar PTS). This major carbohydrate active-transport system catalyzes the phosphorylation of incoming sugar substrates concomitantly with their translocation across the cell membrane. The phosphoryl group from phosphoenolpyruvate (PEP) is transferred to the phosphoryl carrier protein HPr by enzyme I. Phospho-HPr then transfers it to the PTS EIIA domain. In Pseudomonas aeruginosa (strain ATCC 15692 / DSM 22644 / CIP 104116 / JCM 14847 / LMG 12228 / 1C / PRS 101 / PAO1), this protein is Phosphocarrier protein HPr (ptsH).